A 443-amino-acid polypeptide reads, in one-letter code: Nitrate/nitrite binding protein NrtA (443 aa).

The N-terminal stretch at 1–25 (MSQFSRRKFLLTAGGTAAAALWLNA) is a signal peptide. Cys-26 carries N-palmitoyl cysteine lipidation. Cys-26 carries S-diacylglycerol cysteine lipidation. A compositionally biased stretch (low complexity) spans 31 to 46 (SSTDTTGSTSTPAPSG). Positions 31 to 52 (SSTDTTGSTSTPAPSGTSGGDA) are disordered. Nitrate is bound by residues Trp-96, Gln-150, His-195, Gly-239, and Lys-268.

This sequence belongs to the CmpA/NrtA family. The complex is composed of two ATP-binding proteins (NrtC and NrtD), two transmembrane proteins (NrtB) and a solute-binding protein (NrtA). NrtA can form homotrimers. In terms of processing, the N-terminus is blocked.

Its subcellular location is the cell inner membrane. Functionally, part of the ABC transporter complex NrtABCD involved in nitrate uptake. The complex is probably also involved in nitrite transport. NrtA is the substrate-binding protein. Binds both nitrate and nitrite with high affinity. The sequence is that of Nitrate/nitrite binding protein NrtA from Synechococcus elongatus (strain ATCC 33912 / PCC 7942 / FACHB-805) (Anacystis nidulans R2).